Reading from the N-terminus, the 138-residue chain is MFDIGATELLVIAIVAILVIGPKDMPLALRTAGRWIGKIRQVSSHFRTGLDAMIREAEIEEMDKKWRERNAEIMAKHPADQMQPLDAPDPALSAAEARAAHTEAAKPARAAEETQADRASADEHPAASEPRLPLEGRD.

The chain crosses the membrane as a helical span at residues methionine 1–glycine 21. The interval methionine 74–aspartate 138 is disordered. The span at glutamine 83–alanine 97 shows a compositional bias: low complexity. The segment covering arginine 98–aspartate 138 has biased composition (basic and acidic residues).

It belongs to the TatB family. In terms of assembly, the Tat system comprises two distinct complexes: a TatABC complex, containing multiple copies of TatA, TatB and TatC subunits, and a separate TatA complex, containing only TatA subunits. Substrates initially bind to the TatABC complex, which probably triggers association of the separate TatA complex to form the active translocon.

It localises to the cell inner membrane. Functionally, part of the twin-arginine translocation (Tat) system that transports large folded proteins containing a characteristic twin-arginine motif in their signal peptide across membranes. Together with TatC, TatB is part of a receptor directly interacting with Tat signal peptides. TatB may form an oligomeric binding site that transiently accommodates folded Tat precursor proteins before their translocation. The polypeptide is Sec-independent protein translocase protein TatB (Erythrobacter litoralis (strain HTCC2594)).